The chain runs to 73 residues: Putative antitoxin M1627_0365 (73 aa).

It belongs to the UPF0330 family.

In terms of biological role, possibly the antitoxin component of a type II toxin-antitoxin (TA) system. This Saccharolobus islandicus (strain M.16.27) (Sulfolobus islandicus) protein is Putative antitoxin M1627_0365.